The primary structure comprises 421 residues: MQLLNFGLLLLPFVAGDLAPQPEPLLAGPSDVVPGQYIVTLKEGLTSAQIRDHKKWVSSVHRANLEGFAAGASGVETEGIMKHFHIHDLNMYSGGFDEKTVEDLSRNPYVKSVHPDQHVYLAKTVTQRQARWGLGYMSSKGKPVPLHSTLVDYSYDDKAGEGVWAYVLDTGINVNHVEFEGRAILGHNAIPNKPHTDEFGHGTYVAGIIAGKTYGVAKKANVVSAKAFDTGSSTYNYILETYDWIVRNITDSNRKNKAVINLSISGAKYQPFDDAVEKAFKAGIATVVAAGNDGKDAKNNTPASSPNAITVGAVRWENTRPSFSNYGKIVDIWAPGELIKSCWKGGNNATSTQSGTSAASPHVAGLVAYLMSTENLPSPSAVTARVLNLTIPNLVKDAKDSPNRVVYNGIQERKFTLPKYF.

Residues 1-16 (MQLLNFGLLLLPFVAG) form the signal peptide. Positions 17–122 (DLAPQPEPLL…VHPDQHVYLA (106 aa)) are excised as a propeptide. Residues 36–122 (QYIVTLKEGL…VHPDQHVYLA (87 aa)) form the Inhibitor I9 domain. In terms of domain architecture, Peptidase S8 spans 131-421 (RWGLGYMSSK…ERKFTLPKYF (291 aa)). Catalysis depends on charge relay system residues Asp169 and His201. 3 N-linked (GlcNAc...) asparagine glycosylation sites follow: Asn248, Asn261, and Asn348. The Charge relay system role is filled by Ser357. The N-linked (GlcNAc...) asparagine glycan is linked to Asn388.

It belongs to the peptidase S8 family.

Its subcellular location is the secreted. Secreted subtilisin-like serine protease with keratinolytic activity that contributes to pathogenicity. In Trichophyton equinum (Horse ringworm fungus), this protein is Subtilisin-like protease 2 (SUB2).